Consider the following 738-residue polypeptide: Dipeptidyl peptidase 3 (738 aa).

At Ala2 the chain carries N-acetylalanine. His450 is a binding site for Zn(2+). Glu451 is an active-site residue. The Zn(2+) site is built by His455 and Glu508.

The protein belongs to the peptidase M49 family. Zn(2+) serves as cofactor.

It is found in the cytoplasm. It carries out the reaction Release of an N-terminal dipeptide from a peptide comprising four or more residues, with broad specificity. Also acts on dipeptidyl 2-naphthylamides.. With respect to regulation, inhibited by spinorphin, an opioid peptide derived from hemoglobin. Functionally, cleaves and degrades bioactive peptides, including angiotensin, Leu-enkephalin and Met-enkephalin. Also cleaves Arg-Arg-beta-naphthylamide. This Rattus norvegicus (Rat) protein is Dipeptidyl peptidase 3 (Dpp3).